The following is a 403-amino-acid chain: Flavohemoprotein (403 aa).

One can recognise a Globin domain in the interval methionine 1–lysine 138. Histidine 85 lines the heme b pocket. Catalysis depends on charge relay system residues tyrosine 95 and glutamate 137. Residues glycine 149–glycine 403 form a reductase region. The 106-residue stretch at arginine 152–glutamine 257 folds into the FAD-binding FR-type domain. FAD-binding positions include tyrosine 190 and arginine 206–serine 209. Residue glycine 269–proline 274 coordinates NADP(+). Residue threonine 390–proline 393 participates in FAD binding.

The protein belongs to the globin family. Two-domain flavohemoproteins subfamily. In the C-terminal section; belongs to the flavoprotein pyridine nucleotide cytochrome reductase family. It depends on heme b as a cofactor. The cofactor is FAD.

It catalyses the reaction 2 nitric oxide + NADPH + 2 O2 = 2 nitrate + NADP(+) + H(+). It carries out the reaction 2 nitric oxide + NADH + 2 O2 = 2 nitrate + NAD(+) + H(+). The sequence is that of Flavohemoprotein from Deinococcus radiodurans (strain ATCC 13939 / DSM 20539 / JCM 16871 / CCUG 27074 / LMG 4051 / NBRC 15346 / NCIMB 9279 / VKM B-1422 / R1).